The primary structure comprises 121 residues: uncharacterized protein (121 aa).

The HIT domain occupies 7 to 121; the sequence is IFCKIVRGEV…GGREMSWPPG (115 aa). A Histidine triad motif motif is present at residues 105-109; that stretch reads HLHLH.

This is an uncharacterized protein from Aquifex aeolicus (strain VF5).